The following is a 119-amino-acid chain: DNA-binding protein MmarC7_1157 (119 aa).

Basic and acidic residues predominate over residues 1 to 12 (MNPEEIRQRRLQ). The tract at residues 1–37 (MNPEEIRQRRLQEMQAKAQEQGAANDPEAQRQAQEQQ) is disordered.

This sequence belongs to the PDCD5 family.

This Methanococcus maripaludis (strain C7 / ATCC BAA-1331) protein is DNA-binding protein MmarC7_1157.